The sequence spans 465 residues: Ribulose bisphosphate carboxylase large chain (465 aa).

Position 4 is an N6,N6,N6-trimethyllysine (Lys4). Asn113 and Thr163 together coordinate substrate. Lys165 acts as the Proton acceptor in catalysis. Lys167 lines the substrate pocket. Mg(2+)-binding residues include Lys191, Asp193, and Glu194. An N6-carboxylysine modification is found at Lys191. The active-site Proton acceptor is His284. Positions 285, 317, and 369 each coordinate substrate.

The protein belongs to the RuBisCO large chain family. Type I subfamily. As to quaternary structure, heterohexadecamer of 8 large chains and 8 small chains; disulfide-linked. The disulfide link is formed within the large subunit homodimers. Mg(2+) is required as a cofactor. Post-translationally, the disulfide bond which can form in the large chain dimeric partners within the hexadecamer appears to be associated with oxidative stress and protein turnover.

It localises to the plastid. The protein resides in the chloroplast. It carries out the reaction 2 (2R)-3-phosphoglycerate + 2 H(+) = D-ribulose 1,5-bisphosphate + CO2 + H2O. The catalysed reaction is D-ribulose 1,5-bisphosphate + O2 = 2-phosphoglycolate + (2R)-3-phosphoglycerate + 2 H(+). Its function is as follows. RuBisCO catalyzes two reactions: the carboxylation of D-ribulose 1,5-bisphosphate, the primary event in carbon dioxide fixation, as well as the oxidative fragmentation of the pentose substrate in the photorespiration process. Both reactions occur simultaneously and in competition at the same active site. This Acer saccharum (Sugar maple) protein is Ribulose bisphosphate carboxylase large chain.